The primary structure comprises 117 residues: Ribosome-binding factor A (117 aa).

This sequence belongs to the RbfA family. In terms of assembly, monomer. Binds 30S ribosomal subunits, but not 50S ribosomal subunits or 70S ribosomes.

It localises to the cytoplasm. In terms of biological role, one of several proteins that assist in the late maturation steps of the functional core of the 30S ribosomal subunit. Associates with free 30S ribosomal subunits (but not with 30S subunits that are part of 70S ribosomes or polysomes). Required for efficient processing of 16S rRNA. May interact with the 5'-terminal helix region of 16S rRNA. This is Ribosome-binding factor A from Leptospira borgpetersenii serovar Hardjo-bovis (strain JB197).